The chain runs to 269 residues: L-cystine-binding protein TcyJ (269 aa).

The signal sequence occupies residues 1–20 (MNKRKGLVLLLSVFALLGGG). Residue Cys-21 is the site of N-palmitoyl cysteine attachment. Cys-21 is lipidated: S-diacylglycerol cysteine.

Belongs to the bacterial solute-binding protein 3 family. In terms of assembly, the complex is composed of two ATP-binding proteins (TcyN), two transmembrane proteins (TcyL and TcyM) and two solute-binding proteins (TcyJ and TcyK).

It is found in the cell membrane. Functionally, part of the ABC transporter complex TcyJKLMN involved in L-cystine import. Is also involved in cystathionine, djenkolate, and S-methylcysteine transport. In Bacillus subtilis (strain 168), this protein is L-cystine-binding protein TcyJ (tcyJ).